Reading from the N-terminus, the 512-residue chain is 2'-5'-oligoadenylate synthase-like protein 1 (512 aa).

2 consecutive Ubiquitin-like domains span residues 351 to 430 (IQVT…ISPE) and 431 to 507 (IQVF…EGKA).

This sequence belongs to the 2-5A synthase family. Specifically interacts with the ligand binding domain of the thyroid receptor (TR). TRIP14 does not require the presence of thyroid hormone for its interaction. Binds MBD1.

It localises to the nucleus. The protein localises to the nucleolus. The protein resides in the cytoplasm. Functionally, does not have 2'-5'-OAS activity, but can bind double-stranded RNA. Displays antiviral activity via an alternative antiviral pathway independent of RNase L. This Rattus norvegicus (Rat) protein is 2'-5'-oligoadenylate synthase-like protein 1 (Oasl).